Reading from the N-terminus, the 195-residue chain is FMN-dependent NADH:quinone oxidoreductase (195 aa).

Residues S10, 16–18, and 91–94 each bind FMN; these read SQS and MYNF.

The protein belongs to the azoreductase type 1 family. As to quaternary structure, homodimer. It depends on FMN as a cofactor.

The catalysed reaction is 2 a quinone + NADH + H(+) = 2 a 1,4-benzosemiquinone + NAD(+). It carries out the reaction N,N-dimethyl-1,4-phenylenediamine + anthranilate + 2 NAD(+) = 2-(4-dimethylaminophenyl)diazenylbenzoate + 2 NADH + 2 H(+). Its function is as follows. Quinone reductase that provides resistance to thiol-specific stress caused by electrophilic quinones. In terms of biological role, also exhibits azoreductase activity. Catalyzes the reductive cleavage of the azo bond in aromatic azo compounds to the corresponding amines. This chain is FMN-dependent NADH:quinone oxidoreductase, found in Aeromonas salmonicida (strain A449).